A 239-amino-acid chain; its full sequence is 4-hydroxy-tetrahydrodipicolinate reductase (239 aa).

Residues 8-13, 78-80, and 102-105 each bind NAD(+); these read GSTGKM, GTT, and SANM. The Proton donor/acceptor role is filled by histidine 134. Histidine 135 contributes to the (S)-2,3,4,5-tetrahydrodipicolinate binding site. The active-site Proton donor is lysine 138. Position 144-145 (144-145) interacts with (S)-2,3,4,5-tetrahydrodipicolinate; the sequence is GT.

This sequence belongs to the DapB family.

Its subcellular location is the cytoplasm. The enzyme catalyses (S)-2,3,4,5-tetrahydrodipicolinate + NAD(+) + H2O = (2S,4S)-4-hydroxy-2,3,4,5-tetrahydrodipicolinate + NADH + H(+). The catalysed reaction is (S)-2,3,4,5-tetrahydrodipicolinate + NADP(+) + H2O = (2S,4S)-4-hydroxy-2,3,4,5-tetrahydrodipicolinate + NADPH + H(+). The protein operates within amino-acid biosynthesis; L-lysine biosynthesis via DAP pathway; (S)-tetrahydrodipicolinate from L-aspartate: step 4/4. In terms of biological role, catalyzes the conversion of 4-hydroxy-tetrahydrodipicolinate (HTPA) to tetrahydrodipicolinate. In Rickettsia peacockii (strain Rustic), this protein is 4-hydroxy-tetrahydrodipicolinate reductase.